A 197-amino-acid polypeptide reads, in one-letter code: Nucleoid occlusion factor SlmA (197 aa).

The 61-residue stretch at 7–67 (INRREHILQC…GLIEFIEESL (61 aa)) folds into the HTH tetR-type domain. Positions 30–49 (TTAKLAAEVGVSEAALYRHF) form a DNA-binding region, H-T-H motif. A coiled-coil region spans residues 109 to 136 (DALLGENERLRSRISQLFAKIETHLKQI).

This sequence belongs to the nucleoid occlusion factor SlmA family. Homodimer. Interacts with FtsZ.

It localises to the cytoplasm. The protein resides in the nucleoid. Functionally, required for nucleoid occlusion (NO) phenomenon, which prevents Z-ring formation and cell division over the nucleoid. Acts as a DNA-associated cell division inhibitor that binds simultaneously chromosomal DNA and FtsZ, and disrupts the assembly of FtsZ polymers. SlmA-DNA-binding sequences (SBS) are dispersed on non-Ter regions of the chromosome, preventing FtsZ polymerization at these regions. This Shewanella halifaxensis (strain HAW-EB4) protein is Nucleoid occlusion factor SlmA.